We begin with the raw amino-acid sequence, 403 residues long: Phosphoglycerate kinase (403 aa).

Substrate contacts are provided by residues 21–23 (DFN), R36, 59–62 (HLGR), R119, and R154. ATP is bound by residues K207, G299, E330, and 357–360 (GGDA).

This sequence belongs to the phosphoglycerate kinase family. Monomer.

It localises to the cytoplasm. The catalysed reaction is (2R)-3-phosphoglycerate + ATP = (2R)-3-phospho-glyceroyl phosphate + ADP. Its pathway is carbohydrate degradation; glycolysis; pyruvate from D-glyceraldehyde 3-phosphate: step 2/5. The sequence is that of Phosphoglycerate kinase from Chlamydia felis (strain Fe/C-56) (Chlamydophila felis).